Here is a 502-residue protein sequence, read N- to C-terminus: NADH-quinone oxidoreductase subunit N (502 aa).

14 helical membrane passes run 16–36 (TLVP…IDLF), 47–67 (MLSL…AGVF), 85–105 (LAIL…PLAL), 113–133 (FSYP…QFMV), 138–158 (LILI…LIAM), 172–192 (FTMG…FYAL), 213–233 (IGFV…KLSM), 248–268 (SAAL…IVAM), 273–293 (FLIH…VVVT), 310–330 (MLAY…LIGT), 337–357 (LFLY…MLWI), 387–407 (ASIM…ALFW), 410–430 (MYLM…IMAL), and 470–490 (TIIG…NQLI).

The protein belongs to the complex I subunit 2 family. In terms of assembly, NDH-1 is composed of 14 different subunits. Subunits NuoA, H, J, K, L, M, N constitute the membrane sector of the complex.

The protein localises to the cell inner membrane. The enzyme catalyses a quinone + NADH + 5 H(+)(in) = a quinol + NAD(+) + 4 H(+)(out). NDH-1 shuttles electrons from NADH, via FMN and iron-sulfur (Fe-S) centers, to quinones in the respiratory chain. The immediate electron acceptor for the enzyme in this species is believed to be ubiquinone. Couples the redox reaction to proton translocation (for every two electrons transferred, four hydrogen ions are translocated across the cytoplasmic membrane), and thus conserves the redox energy in a proton gradient. This chain is NADH-quinone oxidoreductase subunit N, found in Sulfurimonas denitrificans (strain ATCC 33889 / DSM 1251) (Thiomicrospira denitrificans (strain ATCC 33889 / DSM 1251)).